A 340-amino-acid polypeptide reads, in one-letter code: Very-long-chain 3-oxoacyl-CoA reductase (340 aa).

Residues L23–V43 form a helical membrane-spanning segment. 10 residues coordinate NADP(+): V68, R109, D123, D131, N150, K185, Y217, K221, V250, and T252. Y217 functions as the Proton donor in the catalytic mechanism. Catalysis depends on K221, which acts as the Lowers pKa of active site Tyr.

The protein belongs to the short-chain dehydrogenases/reductases (SDR) family.

The protein localises to the endoplasmic reticulum membrane. The catalysed reaction is a very-long-chain (3R)-3-hydroxyacyl-CoA + NADP(+) = a very-long-chain 3-oxoacyl-CoA + NADPH + H(+). It participates in lipid metabolism; fatty acid biosynthesis. Its function is as follows. Component of the microsomal membrane bound fatty acid elongation system, which produces the 26-carbon very long-chain fatty acids (VLCFA) from palmitate. Catalyzes the reduction of the 3-ketoacyl-CoA intermediate that is formed in each cycle of fatty acid elongation. VLCFAs serve as precursors for ceramide and sphingolipids. In Podospora anserina (strain S / ATCC MYA-4624 / DSM 980 / FGSC 10383) (Pleurage anserina), this protein is Very-long-chain 3-oxoacyl-CoA reductase.